Here is a 413-residue protein sequence, read N- to C-terminus: Phosphopentomutase (413 aa).

The Mn(2+) site is built by Asp-11, Asp-306, His-311, Asp-347, His-348, and His-359.

Belongs to the phosphopentomutase family. The cofactor is Mn(2+).

Its subcellular location is the cytoplasm. It catalyses the reaction 2-deoxy-alpha-D-ribose 1-phosphate = 2-deoxy-D-ribose 5-phosphate. It carries out the reaction alpha-D-ribose 1-phosphate = D-ribose 5-phosphate. It functions in the pathway carbohydrate degradation; 2-deoxy-D-ribose 1-phosphate degradation; D-glyceraldehyde 3-phosphate and acetaldehyde from 2-deoxy-alpha-D-ribose 1-phosphate: step 1/2. In terms of biological role, isomerase that catalyzes the conversion of deoxy-ribose 1-phosphate (dRib-1-P) and ribose 1-phosphate (Rib-1-P) to deoxy-ribose 5-phosphate (dRib-5-P) and ribose 5-phosphate (Rib-5-P), respectively. The chain is Phosphopentomutase from Helicobacter pylori (strain G27).